The sequence spans 403 residues: 3-(3-hydroxy-phenyl)propionate transporter (403 aa).

At 1–16 (MSTRTPSSSSSRLMLT) the chain is on the cytoplasmic side. A helical transmembrane segment spans residues 17-37 (IGLCFLVALMEGLDLQAAGIA). Residues 38 to 53 (AGGIAQAFALDKMQMG) are Periplasmic-facing. The helical transmembrane segment at 54 to 74 (WIFSAGILGLLPGALVGGMLA) threads the bilayer. The Cytoplasmic segment spans residues 75 to 81 (DRYGRKR). Residues 82–102 (ILIGSVALFGLFSLATAIAWD) traverse the membrane as a helical segment. At 103 to 105 (FPS) the chain is on the periplasmic side. A helical transmembrane segment spans residues 106–126 (LVFARLMTGVGLGAALPNLIA). At 127–142 (LTSEAAGPRFRGTAVS) the chain is on the cytoplasmic side. The helical transmembrane segment at 143–163 (LMYCGVPIGAALAATLGFAGA) threads the bilayer. Asn164 is a topological domain (periplasmic). A helical transmembrane segment spans residues 165-185 (LAWQTVFWVGGVVPLILVPLL). Residues 186–217 (MRWLPESAVFAGEKQSAPPLRALFAPETATAT) are Cytoplasmic-facing. Residues 218–238 (LLLWLCYFFTLLVVYMLINWL) traverse the membrane as a helical segment. Topologically, residues 239 to 253 (PLLLVEQGFQPSQAA) are periplasmic. The chain crosses the membrane as a helical span at residues 254–274 (GVMFALQMGAASGTLMLGALM). Residues 275 to 279 (DKLRP) lie on the Cytoplasmic side of the membrane. A helical transmembrane segment spans residues 280-300 (VTMSLLIYSGMLASLLALGTV). Over 301 to 306 (SSFNGM) the chain is Periplasmic. The chain crosses the membrane as a helical span at residues 307–327 (LLAGFVAGLFATGGQSVLYAL). Over 328–339 (APLFYSSQIRAT) the chain is Cytoplasmic. A helical membrane pass occupies residues 340-360 (GVGTAVAVGRLGAMSGPLLAG). Residues 361–369 (KMLALGTGT) are Periplasmic-facing. Residues 370–390 (VGVMAASAPGILVAGLAVFIL) form a helical membrane-spanning segment. Residues 391–403 (MSRRSRIQPCADA) lie on the Cytoplasmic side of the membrane.

The protein belongs to the major facilitator superfamily. Aromatic acid:H(+) symporter (AAHS) (TC 2.A.1.15) family.

It is found in the cell inner membrane. It carries out the reaction 3-(3-hydroxyphenyl)propanoate(in) + H(+)(in) = 3-(3-hydroxyphenyl)propanoate(out) + H(+)(out). With respect to regulation, inhibited by carbonyl cyanide m-chlorophenylhydrazone (CCCP), which dissipates the proton motive force. Uptake of 3-(3-hydroxyphenyl)propionate (3HPP) across the cytoplasmic membrane. Transport is driven by the proton motive force. Does not transport benzoate, 3-hydroxybenzoate or gentisate. The polypeptide is 3-(3-hydroxy-phenyl)propionate transporter (Escherichia coli (strain K12)).